Reading from the N-terminus, the 675-residue chain is Rho guanine nucleotide exchange factor 37 (675 aa).

The disordered stretch occupies residues 1–26 (MAKHGADEPSSRSGSPDREGRASEDR). Residues 30–213 (HQRLAVRELI…QDVNTNINEY (184 aa)) enclose the DH domain. The 202-residue stretch at 254 to 455 (LKQEAGLIPR…LPHHHVPEPA (202 aa)) folds into the BAR domain. SH3 domains are found at residues 506–569 (GPGK…LYHV) and 602–665 (PTMN…RARS).

Its function is as follows. May act as a guanine nucleotide exchange factor (GEF). The polypeptide is Rho guanine nucleotide exchange factor 37 (ARHGEF37) (Homo sapiens (Human)).